The chain runs to 506 residues: MVSIRPDEISAILKQQIEDYDKSVSVSNVGSVLTVGDGIARVYGLQQAMAGELLEFEDGTEGIALNLEDDNVGAVLMGEGLGIQEGSTVKATGKIASVPVGEAMLGRVVNSLGRAIDGKGEIATSETRLIESMAPGIIQRKSVHEPMQTGITAIDAMIPVGRGQRELIIGDRQTGKTAIAIDTILNQKDQDMICVYVAVGQKAASVANVVEVLRERGALDYSVIVAANASEPAALQYLAPYTGASIAEYFMYKGKATLVIYDDLSKQAAAYRQMSLLLRRPPGREAYPGDVFYCHSRLLERAAKLSDAMGKGSMTALPIIETQAGDVSAYIPTNVISITDGQIFLSSDLFNSGLRPAINVGISVSRVGGAAQTKAIKKIAGTLKLELAQFAELAAFSQFASDLDASTQQQLERGKRLRELLKQPQFSPLILAEQVAIVYAGVKGLIDAVPVDKVVDFSRELREYLKSNKPEFITEIQEKKLMSPEAEAILKDAISEVVSTLVASAA.

An ATP-binding site is contributed by 170–177; it reads GDRQTGKT.

Belongs to the ATPase alpha/beta chains family. As to quaternary structure, F-type ATPases have 2 components, CF(1) - the catalytic core - and CF(0) - the membrane proton channel. CF(1) has five subunits: alpha(3), beta(3), gamma(1), delta(1), epsilon(1). CF(0) has four main subunits: a(1), b(1), b'(1) and c(9-12).

The protein resides in the cellular thylakoid membrane. It catalyses the reaction ATP + H2O + 4 H(+)(in) = ADP + phosphate + 5 H(+)(out). Functionally, produces ATP from ADP in the presence of a proton gradient across the membrane. The alpha chain is a regulatory subunit. In Parasynechococcus marenigrum (strain WH8102), this protein is ATP synthase subunit alpha.